We begin with the raw amino-acid sequence, 301 residues long: MTTKHDVKTFQGFIMTLQEYWAQQGCAIVQPLDMEVGAGTFHPMTFLRSLGPEPMSSAYVQPSRRPTDGRYGENPNRLQHYYQFQVVLKPSPSNMQELYLGSLEALGVDMNVHDVRFVEDNWESPTLGAWGLGWEIWLNGMEVSQFTYFQQVGGLECKPVTGEITYGLERLAMYIQEVDSVYDLVWTDGPLGKVMYGDIFHQNEVEQSTYNFEHADVDVQFKMFDDCEQACQRLLALEKPLPLPAYEQVMKASHAFNLLDARHAISVTERQRYILRVRTMAKGVAEAYYQAREALGFPMCK.

Belongs to the class-II aminoacyl-tRNA synthetase family. As to quaternary structure, tetramer of two alpha and two beta subunits.

The protein localises to the cytoplasm. It carries out the reaction tRNA(Gly) + glycine + ATP = glycyl-tRNA(Gly) + AMP + diphosphate. The chain is Glycine--tRNA ligase alpha subunit from Shewanella halifaxensis (strain HAW-EB4).